A 372-amino-acid polypeptide reads, in one-letter code: Tetraacyldisaccharide 4'-kinase (372 aa).

Residue Thr-65–Thr-72 participates in ATP binding. Residues Gln-351–Ala-372 form a disordered region. A compositionally biased stretch (basic and acidic residues) spans Gly-360–Ala-372.

Belongs to the LpxK family.

The enzyme catalyses a lipid A disaccharide + ATP = a lipid IVA + ADP + H(+). Its pathway is glycolipid biosynthesis; lipid IV(A) biosynthesis; lipid IV(A) from (3R)-3-hydroxytetradecanoyl-[acyl-carrier-protein] and UDP-N-acetyl-alpha-D-glucosamine: step 6/6. Functionally, transfers the gamma-phosphate of ATP to the 4'-position of a tetraacyldisaccharide 1-phosphate intermediate (termed DS-1-P) to form tetraacyldisaccharide 1,4'-bis-phosphate (lipid IVA). This Cupriavidus metallidurans (strain ATCC 43123 / DSM 2839 / NBRC 102507 / CH34) (Ralstonia metallidurans) protein is Tetraacyldisaccharide 4'-kinase.